Consider the following 37-residue polypeptide: Protease 2 large chain (37 aa).

Over residues 1–14 (NDGNGRDSDPHDPG) the composition is skewed to basic and acidic residues. The disordered stretch occupies residues 1 to 37 (NDGNGRDSDPHDPGDWTTAGQCGLWQPARNSQHWTLV). The span at 28–37 (ARNSQHWTLV) shows a compositional bias: polar residues.

Belongs to the peptidase S8 family. Heterodimer of a large and a small chain.

The protein resides in the secreted. In Achromobacter lyticus, this protein is Protease 2 large chain.